The sequence spans 84 residues: U-scoloptoxin(10)-Er1a (84 aa).

The first 24 residues, 1–24 (MSRFCLLFVAFGFVLYFLHMEVTG), serve as a signal peptide directing secretion.

This sequence belongs to the scoloptoxin-10 family. In terms of processing, contains 3 disulfide bonds. Expressed by the venom gland.

Its subcellular location is the secreted. The chain is U-scoloptoxin(10)-Er1a from Ethmostigmus rubripes (Giant centipede).